Reading from the N-terminus, the 137-residue chain is Large-conductance mechanosensitive channel (137 aa).

The next 2 helical transmembrane spans lie at 14–34 (VLDLAVGVIIGAAFTAIINSL) and 81–101 (GSFLNAVINFLLVAFVIFLIV).

The protein belongs to the MscL family. As to quaternary structure, homopentamer.

Its subcellular location is the cell membrane. Channel that opens in response to stretch forces in the membrane lipid bilayer. May participate in the regulation of osmotic pressure changes within the cell. The protein is Large-conductance mechanosensitive channel of Chloroflexus aggregans (strain MD-66 / DSM 9485).